The sequence spans 371 residues: MKPSLFVGVMSGTSADGIDVALVDFSQATPALVGSESHAYPNHIREHVLGLCTPANNEIDALGQLDVELGKLYAHAVNSLLANTQTPAAQIQAIGCHGQTLRHRPLGSGYASPFSLQIGDPNTIAALTGIATVADFRRKDVALGGQGAPLVPAFHAAVFGSTTTDRCIANIGGIANITCLPANSHIAGYDTGPGNALMDAWIEANQGAKYDAGGAWAQTGKLNQPLLEILLQHPYFALPAPKSTGREDFNMTWLQACLNQTNLPLPPEDVQATLTELTAISLTDGVKRSCPNAELVICGGGAFNTALLERIQHHYPQKPTVTSQQLGIAPTWVEAMAFAWLAMRRLENQPGNVPAVTGASREAVLGGIYTP.

12 to 19 (GTSADGID) contacts ATP.

The protein belongs to the anhydro-N-acetylmuramic acid kinase family.

The catalysed reaction is 1,6-anhydro-N-acetyl-beta-muramate + ATP + H2O = N-acetyl-D-muramate 6-phosphate + ADP + H(+). It participates in amino-sugar metabolism; 1,6-anhydro-N-acetylmuramate degradation. The protein operates within cell wall biogenesis; peptidoglycan recycling. In terms of biological role, catalyzes the specific phosphorylation of 1,6-anhydro-N-acetylmuramic acid (anhMurNAc) with the simultaneous cleavage of the 1,6-anhydro ring, generating MurNAc-6-P. Is required for the utilization of anhMurNAc either imported from the medium or derived from its own cell wall murein, and thus plays a role in cell wall recycling. The sequence is that of Anhydro-N-acetylmuramic acid kinase from Saccharophagus degradans (strain 2-40 / ATCC 43961 / DSM 17024).